The chain runs to 504 residues: ATP synthase subunit alpha, chloroplastic (504 aa).

169–176 is an ATP binding site; the sequence is GDRQTGKT.

Belongs to the ATPase alpha/beta chains family. In terms of assembly, F-type ATPases have 2 components, CF(1) - the catalytic core - and CF(0) - the membrane proton channel. CF(1) has five subunits: alpha(3), beta(3), gamma(1), delta(1), epsilon(1). CF(0) has four main subunits: a, b, b' and c.

Its subcellular location is the plastid. The protein resides in the chloroplast thylakoid membrane. The enzyme catalyses ATP + H2O + 4 H(+)(in) = ADP + phosphate + 5 H(+)(out). Functionally, produces ATP from ADP in the presence of a proton gradient across the membrane. The alpha chain is a regulatory subunit. This chain is ATP synthase subunit alpha, chloroplastic, found in Stigeoclonium helveticum (Green alga).